Here is a 257-residue protein sequence, read N- to C-terminus: Enterotoxin type A (257 aa).

The signal sequence occupies residues 1 to 24; that stretch reads MKKTAFTLLLFIALTLTTSPLVNG. Cys120 and Cys130 are joined by a disulfide. Zn(2+) contacts are provided by His211, His249, and Asp251.

The protein belongs to the staphylococcal/streptococcal toxin family. In terms of assembly, monomer. Interacts with MHC class II molecules alpha/HLA-DRB1 and beta/HLA-DRA chains. The interaction with MHC-II molecules occurs at both zinc-dependent and zinc-independent sites. Interacts with T-cell receptor beta variable 7-9/TRBV7-9. Zn(2+) is required as a cofactor.

The protein localises to the secreted. In terms of biological role, staphylococcal enterotoxin that activates the host immune system by binding as unprocessed molecules to major histocompatibility (MHC) complex class II and T-cell receptor (TCR) molecules. In turn, waves of cellular activation, cytokine production, and migration into the lung tissue and airways occur via alphabeta T-cells. Also causes the intoxication staphylococcal food poisoning syndrome. The illness is characterized by high fever, hypotension, diarrhea, shock, and in some cases death. In Staphylococcus aureus, this protein is Enterotoxin type A (entA).